The sequence spans 393 residues: Ninja-family protein 1 (393 aa).

Disordered stretches follow at residues 1–27 (MEGFSRDLLCGIGKGDAPPPEKRPGQL) and 155–200 (NDDW…KEMN). Basic and acidic residues predominate over residues 156 to 170 (DDWKKRKEAQSLKRL).

The protein belongs to the Ninja family.

Its subcellular location is the nucleus. The protein is Ninja-family protein 1 of Zea mays (Maize).